A 487-amino-acid chain; its full sequence is MSLTLAIVGRPNVGKSTLFNRLVGKRLALVDDQPGVTRDLREGQARLGDLRFTVIDTAGLETATDDSLQGRMRRLTERAVDMADICLFMIDARAGVTPNDEIFADILRRRSAHVILAANKAEGAAADAGVIEAYGLGLGEPIRLSAEHGEGLNELYAVLMPLADEMEQQAEEQAPETDVDLDPEDEDGEEVAAPHAITREKPLQVAVVGRPNAGKSTLINRILGEDRLLTGPEAGITRDAISLQIDWNDTPMRIFDTAGMRKKAKVQEKLEKLSVSDGLRAVKFAEVVVVLLDAAIPFEQQDLRIADLAEREGRAVVIAVNKWDVEENKQDKLRELKESFERLLPQLRGAPLVTVSAKTGRGLERLHDAILRAHEVWNRRIPTAALNRWLIGMLEQHPPPAPQGKRIKLRYMTQAKTRPPGFVVMCSHPDKMPESYSRYLVNGLRADFDMPGTPIRLTLRGQGDKNPYKGRRKKNAGALAKHLKSRG.

EngA-type G domains follow at residues 3 to 167 and 203 to 378; these read LTLA…DEME and LQVA…EVWN. Residues 9 to 16, 56 to 60, and 119 to 122 each bind GTP; these read GRPNVGKS, DTAGL, and NKAE. Positions 167 to 190 are enriched in acidic residues; that stretch reads EQQAEEQAPETDVDLDPEDEDGEE. The interval 167–191 is disordered; the sequence is EQQAEEQAPETDVDLDPEDEDGEEV. GTP is bound by residues 209 to 216, 256 to 260, and 321 to 324; these read GRPNAGKS, DTAGM, and NKWD. Residues 379-465 form the KH-like domain; that stretch reads RRIPTAALNR…RLTLRGQGDK (87 aa). The segment at 458–487 is disordered; sequence TLRGQGDKNPYKGRRKKNAGALAKHLKSRG. Over residues 468 to 487 the composition is skewed to basic residues; that stretch reads YKGRRKKNAGALAKHLKSRG.

It belongs to the TRAFAC class TrmE-Era-EngA-EngB-Septin-like GTPase superfamily. EngA (Der) GTPase family. Associates with the 50S ribosomal subunit.

Functionally, GTPase that plays an essential role in the late steps of ribosome biogenesis. This is GTPase Der from Ruegeria pomeroyi (strain ATCC 700808 / DSM 15171 / DSS-3) (Silicibacter pomeroyi).